A 248-amino-acid polypeptide reads, in one-letter code: 3-deoxy-manno-octulosonate cytidylyltransferase (248 aa).

This sequence belongs to the KdsB family.

It is found in the cytoplasm. It carries out the reaction 3-deoxy-alpha-D-manno-oct-2-ulosonate + CTP = CMP-3-deoxy-beta-D-manno-octulosonate + diphosphate. It functions in the pathway nucleotide-sugar biosynthesis; CMP-3-deoxy-D-manno-octulosonate biosynthesis; CMP-3-deoxy-D-manno-octulosonate from 3-deoxy-D-manno-octulosonate and CTP: step 1/1. The protein operates within bacterial outer membrane biogenesis; lipopolysaccharide biosynthesis. Activates KDO (a required 8-carbon sugar) for incorporation into bacterial lipopolysaccharide in Gram-negative bacteria. The polypeptide is 3-deoxy-manno-octulosonate cytidylyltransferase (Chlorobaculum parvum (strain DSM 263 / NCIMB 8327) (Chlorobium vibrioforme subsp. thiosulfatophilum)).